A 678-amino-acid polypeptide reads, in one-letter code: Auxin response factor 7 (678 aa).

The segment at residues 128-230 (FCKTLTASDT…ELRVGVRRLM (103 aa)) is a DNA-binding region (TF-B3). 2 disordered regions span residues 360–386 (AVSNSQPSPQPPARNKRARPPASNSIA) and 502–547 (GVGQ…SRQV). The region spanning 548 to 641 (RSCTKVIMQG…EAKQLTPKSK (94 aa)) is the PB1 domain. Residues 643–678 (PIIGDAIKPNPNKQSPESDMPHSDLDSTAPVTDKDC) are disordered.

This sequence belongs to the ARF family. As to quaternary structure, homodimers and heterodimers. In terms of tissue distribution, expressed in roots, culms, leaves and young panicles.

The protein resides in the nucleus. Auxin response factors (ARFs) are transcriptional factors that bind specifically to the DNA sequence 5'-TGTCTC-3' found in the auxin-responsive promoter elements (AuxREs). This Oryza sativa subsp. japonica (Rice) protein is Auxin response factor 7 (ARF7).